A 633-amino-acid polypeptide reads, in one-letter code: DNA mismatch repair protein MutL (633 aa).

This sequence belongs to the DNA mismatch repair MutL/HexB family.

In terms of biological role, this protein is involved in the repair of mismatches in DNA. It is required for dam-dependent methyl-directed DNA mismatch repair. May act as a 'molecular matchmaker', a protein that promotes the formation of a stable complex between two or more DNA-binding proteins in an ATP-dependent manner without itself being part of a final effector complex. The chain is DNA mismatch repair protein MutL from Macrococcus caseolyticus (strain JCSC5402) (Macrococcoides caseolyticum).